The primary structure comprises 505 residues: Lysine--tRNA ligase (505 aa).

Mg(2+) contacts are provided by Glu403 and Glu410.

The protein belongs to the class-II aminoacyl-tRNA synthetase family. As to quaternary structure, homodimer. Mg(2+) is required as a cofactor.

The protein localises to the cytoplasm. The catalysed reaction is tRNA(Lys) + L-lysine + ATP = L-lysyl-tRNA(Lys) + AMP + diphosphate. This chain is Lysine--tRNA ligase, found in Methanospirillum hungatei JF-1 (strain ATCC 27890 / DSM 864 / NBRC 100397 / JF-1).